The primary structure comprises 135 residues: T-cell receptor gamma chain V region V108A (135 aa).

Residues 1 to 18 (MLLLRWFTSCCLWVFGLG) form the signal peptide. The segment at 19 to 116 (QLEQTELSVT…EATYYCAVWM (98 aa)) is v segment. Positions 117 to 135 (RWSSGFHKVFAEGTKLIVI) are j segment.

The protein is T-cell receptor gamma chain V region V108A of Mus musculus (Mouse).